The sequence spans 357 residues: Peptide chain release factor 1 (357 aa).

Q232 carries the post-translational modification N5-methylglutamine.

Belongs to the prokaryotic/mitochondrial release factor family. In terms of processing, methylated by PrmC. Methylation increases the termination efficiency of RF1.

It localises to the cytoplasm. In terms of biological role, peptide chain release factor 1 directs the termination of translation in response to the peptide chain termination codons UAG and UAA. The chain is Peptide chain release factor 1 from Maridesulfovibrio salexigens (strain ATCC 14822 / DSM 2638 / NCIMB 8403 / VKM B-1763) (Desulfovibrio salexigens).